Reading from the N-terminus, the 583-residue chain is Radixin (583 aa).

Positions 5 to 295 constitute an FERM domain; that stretch reads INVRVTTMDA…GNHELYMRRR (291 aa). Residue 60 to 63 participates in a 1,2-diacyl-sn-glycero-3-phospho-(1D-myo-inositol) binding; sequence KLNK. An N6-succinyllysine modification is found at lysine 83. Lysine 278 lines the a 1,2-diacyl-sn-glycero-3-phospho-(1D-myo-inositol) pocket. 3 disordered regions span residues 310 to 330, 376 to 407, and 462 to 526; these read REEK…KKKR, DQER…AKQA, and ELKT…RVKK. Positions 376–400 are enriched in basic and acidic residues; sequence DQERKRAKEEAERLEKERRAAEEAK. Positions 469 to 480 are enriched in pro residues; it reads APPPPPPPPVIP. Composition is skewed to basic and acidic residues over residues 483 to 492 and 506 to 525; these read ENEHDEHDEN and MNHR…ERVK. At threonine 564 the chain carries Phosphothreonine; by ROCK2.

In terms of assembly, binds NHERF1. Interacts with NHERF1, NHERF2, LAYN, MME/NEP and ICAM2. Interacts with CPNE1 (via VWFA domain) and CPNE4 (via VWFA domain). Interacts (via FERM domain) with SPN/CD43 cytoplasmic tail. Interacts with CD44. Interacts with CLIC5; may work together in a complex which also includes EZR and MYO6 to stabilize linkages between the plasma membrane and subjacent actin cytoskeleton at the base of stereocilia. Post-translationally, phosphorylated by tyrosine-protein kinases. Phosphorylation by ROCK2 suppresses the head-to-tail association of the N-terminal and C-terminal halves resulting in an opened conformation which is capable of actin and membrane-binding.

The protein resides in the cell membrane. It localises to the cytoplasm. Its subcellular location is the cytoskeleton. The protein localises to the cleavage furrow. It is found in the cell projection. The protein resides in the microvillus. It localises to the stereocilium. A head-to-tail association, of the N-terminal and C-terminal halves results in a closed conformation (inactive form) which is incapable of actin or membrane-binding. Functionally, probably plays a crucial role in the binding of the barbed end of actin filaments to the plasma membrane. The polypeptide is Radixin (RDX) (Homo sapiens (Human)).